The sequence spans 221 residues: Small ribosomal subunit protein uS3 (221 aa).

The region spanning 39–107 (LRKFLKDKLK…EVFLSIQEVR (69 aa)) is the KH type-2 domain.

It belongs to the universal ribosomal protein uS3 family. As to quaternary structure, part of the 30S ribosomal subunit. Forms a tight complex with proteins S10 and S14.

Binds the lower part of the 30S subunit head. Binds mRNA in the 70S ribosome, positioning it for translation. The chain is Small ribosomal subunit protein uS3 from Bdellovibrio bacteriovorus (strain ATCC 15356 / DSM 50701 / NCIMB 9529 / HD100).